The sequence spans 326 residues: L-threo-3-hydroxyaspartate ammonia-lyase (326 aa).

N6-(pyridoxal phosphate)lysine is present on lysine 53. Pyridoxal 5'-phosphate is bound by residues asparagine 80, 179–183 (GGGGL), and serine 304.

Belongs to the serine/threonine dehydratase family. In terms of assembly, monomer. It depends on pyridoxal 5'-phosphate as a cofactor. The cofactor is Mn(2+). Mg(2+) is required as a cofactor. Requires Ca(2+) as cofactor.

It carries out the reaction (3S)-3-hydroxy-L-aspartate = oxaloacetate + NH4(+). Its activity is regulated as follows. Is strongly inhibited by hydroxylamine and EDTA in vitro. Functionally, catalyzes the deamination of L-threo-3-hydroxyaspartate to oxaloacetate and ammonia. Shows a high specificity towards L-threo-3-hydroxyaspartate as other 3-hydroxyaminoacids, i.e. D,L-erythro- and D-threo-3-hydroxyaspartate, D-threonine, L-threonine, D,L-allothreonine, D-serine, and L-serine, are not substrates for this enzyme. Exhibits no detectable serine racemase activity. Is responsible for the 3-hydroxyaspartate resistance of S.cerevisiae, and thus may be involved in the detoxification of naturally occurring 3-hydroxyaspartate. The protein is L-threo-3-hydroxyaspartate ammonia-lyase (SRY1) of Saccharomyces cerevisiae (strain ATCC 204508 / S288c) (Baker's yeast).